The primary structure comprises 39 residues: Putative beta-neurotoxin (39 aa).

The segment at 1–39 (GGKEGYPLNSSNGCKSGRFAGTNSNENTECKGXDAENGY) is disordered. Residues 3–39 (KEGYPLNSSNGCKSGRFAGTNSNENTECKGXDAENGY) form the LCN-type CS-alpha/beta domain. Residues 28-39 (TECKGXDAENGY) are compositionally biased toward basic and acidic residues.

Belongs to the long (4 C-C) scorpion toxin superfamily. Sodium channel inhibitor family. Beta subfamily. As to expression, expressed by the venom gland.

It localises to the secreted. In terms of biological role, beta toxins bind voltage-independently at site-4 of sodium channels (Nav) and shift the voltage of activation toward more negative potentials thereby affecting sodium channel activation and promoting spontaneous and repetitive firing. The chain is Putative beta-neurotoxin from Tityus pachyurus (Colombian scorpion).